A 329-amino-acid polypeptide reads, in one-letter code: Transcription factor RF2b (329 aa).

2 disordered regions span residues 1–24 (MQEP…RSEV) and 62–97 (SSGP…DGSG). The region spanning 132–195 (DPKRAKRILA…TGLSAENAEL (64 aa)) is the bZIP domain. The interval 134 to 155 (KRAKRILANRQSAARSKERKAR) is basic motif. Positions 160–174 (LERKVQTLQTEATTL) are leucine-zipper. The interval 260–303 (RQNGGTQLPPQFQPPRPNVPNHMLSHPNGLQDIMQQDPLGRLQG) is disordered.

This sequence belongs to the bZIP family. As to quaternary structure, binds DNA as a homodimer or as a heterodimer with RF2a. The heterodimer binds stronger to DNA than the homodimer. As to expression, expressed at high levels in roots, low level in leaf sheath, but not in leaf blade. Predominantly expressed in vascular tissues.

It is found in the nucleus. Transcription factor probably involved in vascular development and shoot tissue organization. Binds to the DNA sequence 5'-CCGAGTGTGCCCCTGG-3' present in the promoter region Box II of the phloem-specific rice tungro bacilliform virus (RTBV) promoter. May regulate tissue-specific expression of the RTBV promoter and virus replication. This is Transcription factor RF2b (RF2b) from Oryza sativa subsp. japonica (Rice).